The primary structure comprises 259 residues: L-ornithine N(alpha)-acyltransferase (259 aa).

This sequence belongs to the acetyltransferase family. OlsB subfamily.

The catalysed reaction is a (3R)-hydroxyacyl-[ACP] + L-ornithine = a lyso-ornithine lipid + holo-[ACP] + H(+). Its pathway is lipid metabolism. Catalyzes the first step in the biosynthesis of ornithine lipids, which are phosphorus-free membrane lipids. Catalyzes the 3-hydroxyacyl-acyl carrier protein-dependent acylation of ornithine to form lyso-ornithine lipid (LOL). In Rhodobacter capsulatus (strain ATCC BAA-309 / NBRC 16581 / SB1003), this protein is L-ornithine N(alpha)-acyltransferase.